The primary structure comprises 140 residues: Nucleoside diphosphate kinase (140 aa).

6 residues coordinate ATP: Lys-11, Phe-59, Arg-87, Thr-93, Arg-104, and Asn-114. Residue His-117 is the Pros-phosphohistidine intermediate of the active site.

Belongs to the NDK family. In terms of assembly, homotetramer. Mg(2+) is required as a cofactor.

The protein resides in the cytoplasm. The enzyme catalyses a 2'-deoxyribonucleoside 5'-diphosphate + ATP = a 2'-deoxyribonucleoside 5'-triphosphate + ADP. It carries out the reaction a ribonucleoside 5'-diphosphate + ATP = a ribonucleoside 5'-triphosphate + ADP. Its function is as follows. Major role in the synthesis of nucleoside triphosphates other than ATP. The ATP gamma phosphate is transferred to the NDP beta phosphate via a ping-pong mechanism, using a phosphorylated active-site intermediate. This chain is Nucleoside diphosphate kinase, found in Cereibacter sphaeroides (strain ATCC 17025 / ATH 2.4.3) (Rhodobacter sphaeroides).